We begin with the raw amino-acid sequence, 596 residues long: UDP-glucuronate:xylan alpha-glucuronosyltransferase 2 (596 aa).

A helical; Signal-anchor for type II membrane protein membrane pass occupies residues 17-37; that stretch reads LIRFNLVLLGFSFLLYTAIFF. Residues D395 and D397 each coordinate Mn(2+). Residues 395-397, 424-426, 451-455, and 504-509 each bind substrate; these read DAD, NSG, NGGDQ, and HYLGWK. H504 contacts Mn(2+).

Belongs to the glycosyltransferase 8 family. Glycogenin subfamily. The cofactor is Mn(2+).

It is found in the golgi apparatus membrane. Glycosyltransferase required for the addition of both glucuronic acid and 4-O-methylglucuronic acid branches to xylan in stem cell walls. In association with GUX1, is responsible for almost all of the substitutions of the xylan backbone in stem glucuronoxylan. The sequence is that of UDP-glucuronate:xylan alpha-glucuronosyltransferase 2 (GUX2) from Arabidopsis thaliana (Mouse-ear cress).